The chain runs to 283 residues: Tetraspanin-33 (283 aa).

Topologically, residues 1-24 are cytoplasmic; the sequence is MARRPRAPAASGEEFSFVSPLVKY. The chain crosses the membrane as a helical span at residues 25–45; sequence LLFFFNMLFWVISMVMVAVGV. At 46–64 the chain is on the extracellular side; that stretch reads YARLMKHAEAALACLAVDP. The chain crosses the membrane as a helical span at residues 65-85; it reads AILLIVVGVLMFLLTFCGCIG. Residues 86–96 are Cytoplasmic-facing; the sequence is SLRENICLLQT. A helical transmembrane segment spans residues 97–117; it reads FSLCLTAVFLLQLAAGILGFV. Residues 118–235 lie on the Extracellular side of the membrane; it reads FSDKARGKVS…DKLVNWIHSN (118 aa). 4 disulfides stabilise this stretch: Cys156–Cys224, Cys157–Cys189, Cys173–Cys183, and Cys190–Cys203. Asn172 carries N-linked (GlcNAc...) asparagine glycosylation. A helical transmembrane segment spans residues 236-256; it reads LFLLGGVALGLAIPQLVGILL. The Cytoplasmic segment spans residues 257–283; the sequence is SQILVNQIKDQIKLQLYNQQHRADPWY.

This sequence belongs to the tetraspanin (TM4SF) family. As to quaternary structure, homodimer; disulfide-linked. Interacts (via extracellular domain) with ADAM10 (via extracellular domain). Interacts (via cytoplasmic domain) with PLEKHA7 (via WW domains); the interaction is dependent on PDZD11 being bound to PLEKHA7 and facilitates the docking of ADAM10 to zonula adherens. Predominantly expressed in erythroblasts.

The protein localises to the cell membrane. It localises to the cell junction. The protein resides in the adherens junction. It is found in the cytoplasm. In terms of biological role, part of TspanC8 subgroup, composed of 6 members that interact with the transmembrane metalloprotease ADAM10. This interaction is required for ADAM10 exit from the endoplasmic reticulum and for enzymatic maturation and trafficking to the cell surface as well as substrate specificity. Different TspanC8/ADAM10 complexes have distinct substrates. Plays an important role in normal erythropoiesis. It has a role in the differentiation of erythroid progenitors. Negatively regulates ligand-induced Notch activity probably by regulating ADAM10 activity. Mediates docking of ADAM10 to zonula adherens by interacting with ADAM10 and, in a PDZD11-dependent manner, with the zonula adherens protein PLEKHA7. This Homo sapiens (Human) protein is Tetraspanin-33.